A 471-amino-acid polypeptide reads, in one-letter code: Sulfate adenylyltransferase subunit 1 (471 aa).

The 217-residue stretch at 24-240 (KSLLRFLTCG…ESADVERELE (217 aa)) folds into the tr-type G domain. Positions 33 to 40 (GSVDDGKS) are G1. 33-40 (GSVDDGKS) serves as a coordination point for GTP. The interval 91 to 95 (GITID) is G2. The G3 stretch occupies residues 112-115 (DTPG). Residues 112 to 116 (DTPGH) and 167 to 170 (NKMD) contribute to the GTP site. Residues 167-170 (NKMD) form a G4 region. A G5 region spans residues 204-206 (SAL).

Belongs to the TRAFAC class translation factor GTPase superfamily. Classic translation factor GTPase family. CysN/NodQ subfamily. As to quaternary structure, heterodimer composed of CysD, the smaller subunit, and CysN.

It catalyses the reaction sulfate + ATP + H(+) = adenosine 5'-phosphosulfate + diphosphate. It functions in the pathway sulfur metabolism; hydrogen sulfide biosynthesis; sulfite from sulfate: step 1/3. Its function is as follows. With CysD forms the ATP sulfurylase (ATPS) that catalyzes the adenylation of sulfate producing adenosine 5'-phosphosulfate (APS) and diphosphate, the first enzymatic step in sulfur assimilation pathway. APS synthesis involves the formation of a high-energy phosphoric-sulfuric acid anhydride bond driven by GTP hydrolysis by CysN coupled to ATP hydrolysis by CysD. This Aeromonas salmonicida (strain A449) protein is Sulfate adenylyltransferase subunit 1.